The chain runs to 1180 residues: DNA-directed RNA polymerase subunit beta' (1180 aa).

Residues Cys60, Cys62, Cys75, and Cys78 each coordinate Zn(2+). 3 residues coordinate Mg(2+): Asp449, Asp451, and Asp453. 4 residues coordinate Zn(2+): Cys792, Cys872, Cys879, and Cys882.

Belongs to the RNA polymerase beta' chain family. The RNAP catalytic core consists of 2 alpha, 1 beta, 1 beta' and 1 omega subunit. When a sigma factor is associated with the core the holoenzyme is formed, which can initiate transcription. Mg(2+) is required as a cofactor. The cofactor is Zn(2+).

The enzyme catalyses RNA(n) + a ribonucleoside 5'-triphosphate = RNA(n+1) + diphosphate. Its function is as follows. DNA-dependent RNA polymerase catalyzes the transcription of DNA into RNA using the four ribonucleoside triphosphates as substrates. In Heliobacterium modesticaldum (strain ATCC 51547 / Ice1), this protein is DNA-directed RNA polymerase subunit beta'.